We begin with the raw amino-acid sequence, 567 residues long: Potassium-transporting ATPase potassium-binding subunit (567 aa).

11 consecutive transmembrane segments (helical) span residues 5–25 (GWIQ…PLGF), 64–84 (TAYA…LYAL), 136–156 (GLTV…IALI), 179–199 (LYVL…LGIP), 254–274 (ISNL…TNVF), 285–305 (WAIL…CYWA), 330–350 (FGIA…CGAV), 357–376 (FTAL…EVIV), 421–441 (MLAI…AVVL), 486–506 (ITIG…ALAI), and 529–549 (LFVG…FFPA).

It belongs to the KdpA family. In terms of assembly, the system is composed of three essential subunits: KdpA, KdpB and KdpC.

The protein resides in the cell inner membrane. Its function is as follows. Part of the high-affinity ATP-driven potassium transport (or Kdp) system, which catalyzes the hydrolysis of ATP coupled with the electrogenic transport of potassium into the cytoplasm. This subunit binds the periplasmic potassium ions and delivers the ions to the membrane domain of KdpB through an intramembrane tunnel. The chain is Potassium-transporting ATPase potassium-binding subunit from Mesorhizobium japonicum (strain LMG 29417 / CECT 9101 / MAFF 303099) (Mesorhizobium loti (strain MAFF 303099)).